Consider the following 499-residue polypeptide: NAD(P)H-quinone oxidoreductase chain 4, chloroplastic (499 aa).

The next 14 helical transmembrane spans lie at 4–24, 35–55, 84–104, 111–129, 134–154, 167–187, 208–228, 242–262, 272–292, 305–325, 330–350, 386–406, 416–436, and 462–482; these read FPWL…IFFL, YTIY…CYNF, GLSI…TLAA, SRLF…IGSF, LLLF…LLSV, FILY…GIGL, ALEI…LPII, HYST…YGLI, AHSI…IYAA, IAYS…SITD, GAVL…FLAG, LALP…GIIT, IVIT…SLSM, and LFVL…PDFV.

Belongs to the complex I subunit 4 family.

It is found in the plastid. Its subcellular location is the chloroplast thylakoid membrane. It catalyses the reaction a plastoquinone + NADH + (n+1) H(+)(in) = a plastoquinol + NAD(+) + n H(+)(out). The enzyme catalyses a plastoquinone + NADPH + (n+1) H(+)(in) = a plastoquinol + NADP(+) + n H(+)(out). In Citrus sinensis (Sweet orange), this protein is NAD(P)H-quinone oxidoreductase chain 4, chloroplastic.